Reading from the N-terminus, the 268-residue chain is Sterol uptake protein 2 (268 aa).

Belongs to the SUT1 family.

The protein resides in the nucleus. Putative transcription factor involved in the regulation of the activity of the cAMP/protein kinase A pathway. Involved in sterol uptake. With SUT1, positively regulates mating by repressing the expression of the mating inhibitors NCE102, PRR2 and RHO5 in response to pheromone. This is Sterol uptake protein 2 from Saccharomyces cerevisiae (strain ATCC 204508 / S288c) (Baker's yeast).